Consider the following 514-residue polypeptide: ATP synthase subunit alpha (514 aa).

170-177 (GDRQTGKT) is an ATP binding site.

This sequence belongs to the ATPase alpha/beta chains family. F-type ATPases have 2 components, CF(1) - the catalytic core - and CF(0) - the membrane proton channel. CF(1) has five subunits: alpha(3), beta(3), gamma(1), delta(1), epsilon(1). CF(0) has three main subunits: a(1), b(2) and c(9-12). The alpha and beta chains form an alternating ring which encloses part of the gamma chain. CF(1) is attached to CF(0) by a central stalk formed by the gamma and epsilon chains, while a peripheral stalk is formed by the delta and b chains.

The protein resides in the cell inner membrane. It catalyses the reaction ATP + H2O + 4 H(+)(in) = ADP + phosphate + 5 H(+)(out). In terms of biological role, produces ATP from ADP in the presence of a proton gradient across the membrane. The alpha chain is a regulatory subunit. The chain is ATP synthase subunit alpha from Acidithiobacillus ferridurans.